The chain runs to 416 residues: UDP-N-acetylmuramoylalanine--D-glutamate ligase (416 aa).

108–114 (GTVGKTT) contacts ATP.

This sequence belongs to the MurCDEF family.

Its subcellular location is the cytoplasm. It catalyses the reaction UDP-N-acetyl-alpha-D-muramoyl-L-alanine + D-glutamate + ATP = UDP-N-acetyl-alpha-D-muramoyl-L-alanyl-D-glutamate + ADP + phosphate + H(+). Its pathway is cell wall biogenesis; peptidoglycan biosynthesis. Functionally, cell wall formation. Catalyzes the addition of glutamate to the nucleotide precursor UDP-N-acetylmuramoyl-L-alanine (UMA). The protein is UDP-N-acetylmuramoylalanine--D-glutamate ligase of Chlamydia muridarum (strain MoPn / Nigg).